We begin with the raw amino-acid sequence, 200 residues long: Ras-related protein RHN1 (200 aa).

GTP is bound by residues 17–25 (GDMGAGKSS), 36–42 (LEFQEST), 65–69 (DTAGQ), 123–126 (NKAD), and 153–155 (SAK). The Effector region motif lies at 39-47 (QESTIGAAF). Residues Cys-198 and Cys-199 are each lipidated (S-geranylgeranyl cysteine).

It belongs to the small GTPase superfamily. Rab family. In terms of tissue distribution, high in stem, root, and inflorescence.

It is found in the cell membrane. In terms of biological role, protein transport. Probably involved in vesicular traffic. The polypeptide is Ras-related protein RHN1 (RHN1) (Nicotiana plumbaginifolia (Leadwort-leaved tobacco)).